Reading from the N-terminus, the 298-residue chain is Glutamyl-Q tRNA(Asp) synthetase (298 aa).

Residues 8–12 (RFAPS) and Glu-44 each bind L-glutamate. Residues 11 to 21 (PSPTGPLHFGS) carry the 'HIGH' region motif. Cys-100, Cys-102, Tyr-123, and Cys-127 together coordinate Zn(2+). Residues Tyr-183 and Arg-201 each contribute to the L-glutamate site. The short motif at 239 to 243 (KLSKQ) is the 'KMSKS' region element. Lys-242 provides a ligand contact to ATP.

This sequence belongs to the class-I aminoacyl-tRNA synthetase family. GluQ subfamily. Zn(2+) serves as cofactor.

Its function is as follows. Catalyzes the tRNA-independent activation of glutamate in presence of ATP and the subsequent transfer of glutamate onto a tRNA(Asp). Glutamate is transferred on the 2-amino-5-(4,5-dihydroxy-2-cyclopenten-1-yl) moiety of the queuosine in the wobble position of the QUC anticodon. The polypeptide is Glutamyl-Q tRNA(Asp) synthetase (Burkholderia orbicola (strain MC0-3)).